We begin with the raw amino-acid sequence, 240 residues long: ICKRNLDIERPSYTNLNRLISQVVSSITASLRFDGALNVDLTEFQTNLVPYPRIHFPLVTYAPIISAEKAYHEQLAVAEVTSACFEPANQMVKCDPRHGKYMACCMLYRGDVVPKDVNAAIATIKTKRSIQFVDWCPTGFKVGINYQPPTVVLGGDLAKVQRAVCMLSNTTAVAEAWARLDHKFDLMYAKRAFVHWYVGEGMEEGEFSEAREDLAALEKDYEEVGLDTFEAEEEEGGDEY.

Asparagine 17 lines the GTP pocket. Residue glutamate 43 is part of the active site.

Belongs to the tubulin family. In terms of assembly, dimer of alpha and beta chains. A typical microtubule is a hollow water-filled tube with an outer diameter of 25 nm and an inner diameter of 15 nM. Alpha-beta heterodimers associate head-to-tail to form protofilaments running lengthwise along the microtubule wall with the beta-tubulin subunit facing the microtubule plus end conferring a structural polarity. Microtubules usually have 13 protofilaments but different protofilament numbers can be found in some organisms and specialized cells. Requires Mg(2+) as cofactor. Undergoes a tyrosination/detyrosination cycle, the cyclic removal and re-addition of a C-terminal tyrosine residue by the enzymes tubulin tyrosine carboxypeptidase (TTCP) and tubulin tyrosine ligase (TTL), respectively.

It localises to the cytoplasm. The protein localises to the cytoskeleton. It carries out the reaction GTP + H2O = GDP + phosphate + H(+). Its function is as follows. Tubulin is the major constituent of microtubules, a cylinder consisting of laterally associated linear protofilaments composed of alpha- and beta-tubulin heterodimers. Microtubules grow by the addition of GTP-tubulin dimers to the microtubule end, where a stabilizing cap forms. Below the cap, tubulin dimers are in GDP-bound state, owing to GTPase activity of alpha-tubulin. The sequence is that of Tubulin alpha chain from Octopus vulgaris (Common octopus).